The chain runs to 300 residues: Dipeptide transport system permease protein DppC (300 aa).

Residues 1 to 31 (MSQVTENKVISAPVPMTPLQEFWHYFKRNKG) are Cytoplasmic-facing. The helical transmembrane segment at 32 to 52 (AVVGLVYVVIVLFIAIFANWI) threads the bilayer. Topologically, residues 53–101 (APYNPAEQFRDALLAPPAWQEGGSMAHLLGTDDVGRDVLSRLMYGARLS) are periplasmic. In terms of domain architecture, ABC transmembrane type-1 spans 98–287 (ARLSLLVGCL…LTVLAFNLMG (190 aa)). A helical transmembrane segment spans residues 102–122 (LLVGCLVVVLSLIMGVILGLI). Over 123–136 (AGYFGGLVDNIIMR) the chain is Cytoplasmic. Residues 137–157 (VVDIMLALPSLLLALVLVAIF) traverse the membrane as a helical segment. Residues 158-206 (GPSIGNAALALTFVALPHYVRLTRAAVLVEVNRDYVTASRVAGAGAMRQ) lie on the Periplasmic side of the membrane. The helical transmembrane segment at 207–227 (MFINIFPNCLAPLIVQASLGF) threads the bilayer. At 228–230 (SNA) the chain is on the cytoplasmic side. Residues 231-251 (ILDMAALGFLGMGAQPPTPEW) form a helical membrane-spanning segment. At 252 to 265 (GTMLSDVLQFAQSA) the chain is on the periplasmic side. Residues 266 to 286 (WWVVTFPGLAILLTVLAFNLM) form a helical membrane-spanning segment. Residues 287 to 300 (GDGLRDALDPKLKQ) lie on the Cytoplasmic side of the membrane.

This sequence belongs to the binding-protein-dependent transport system permease family. OppBC subfamily. In terms of assembly, the complex is composed of two ATP-binding proteins (DppD and DppF), two transmembrane proteins (DppB and DppC) and a solute-binding protein (DppA).

It is found in the cell inner membrane. Its function is as follows. Part of the ABC transporter DppABCDF involved in dipeptide transport. Responsible for the translocation of the substrate across the membrane. This Escherichia coli O157:H7 protein is Dipeptide transport system permease protein DppC (dppC).